The primary structure comprises 220 residues: Putative cobalt transport protein CbiM (220 aa).

6 consecutive transmembrane segments (helical) span residues Gly-6 to Tyr-26, Ile-45 to Gly-65, Gly-74 to Leu-94, Thr-107 to Phe-127, Leu-153 to Val-173, and Ile-188 to Ser-208.

This sequence belongs to the CbiM family. As to quaternary structure, forms an energy-coupling factor (ECF) transporter complex composed of an ATP-binding protein (A component, CbiO), a transmembrane protein (T component, CbiQ) and 2 possible substrate-capture proteins (S components, CbiM and CbiN) of unknown stoichimetry.

It localises to the cell membrane. It functions in the pathway cofactor biosynthesis; adenosylcobalamin biosynthesis. Part of the energy-coupling factor (ECF) transporter complex CbiMNOQ involved in cobalt import. The chain is Putative cobalt transport protein CbiM from Halobacterium salinarum (strain ATCC 29341 / DSM 671 / R1).